A 562-amino-acid chain; its full sequence is Protein FAM83D-B (562 aa).

A disordered region spans residues 424–472 (ITTQTTETSQCTTQTPAPTSSVARLSNSSNSSSSSFSSASTTSTGSNCS). The segment covering 425 to 472 (TTQTTETSQCTTQTPAPTSSVARLSNSSNSSSSSFSSASTTSTGSNCS) has biased composition (low complexity).

This sequence belongs to the FAM83 family.

It localises to the cytoplasm. It is found in the cytoskeleton. The protein localises to the spindle. The protein resides in the spindle pole. Functionally, may regulate cell proliferation, growth, migration and epithelial to mesenchymal transition. May also be important for proper chromosome congression and alignment during mitosis. The protein is Protein FAM83D-B of Xenopus laevis (African clawed frog).